A 207-amino-acid chain; its full sequence is MIKTLDNQVIALAGLAQATHLVRQIAQRGSADAGDMEAVVRSVFAIDADDVPSVYGGVDKIKTGLQILDRQLAGFEPPDAELARYGATLILLERKLVSAPRLLETLRTGIEQVKEQAEYFGELNDTVYANLADLYQRTVSQLRPRVMVNGQPSHLTNSTNANRIRALLLAGIRSVVLWRQCGGERWKLLFQRSAMRKEARRLLQSSQ.

Belongs to the HflD family.

It localises to the cytoplasm. It is found in the cell inner membrane. The chain is High frequency lysogenization protein HflD homolog from Methylococcus capsulatus (strain ATCC 33009 / NCIMB 11132 / Bath).